Reading from the N-terminus, the 84-residue chain is MNLIPRTSIVVYLKHMKHERQIRKYGHIVHSNRDRKFVIMYVNEQDVDQIVHKLMQLKYVRHIDGSPYKYLKKTYEKEKHEIYN.

The protein belongs to the UPF0298 family.

It is found in the cytoplasm. The chain is UPF0298 protein NWMN_0985 from Staphylococcus aureus (strain Newman).